Here is a 548-residue protein sequence, read N- to C-terminus: MNSLDQWRDTWAKVLSIQPSEIDDQDSFFDLGGDSVKAIQLLSEAAQSAINVDLQTFYDNFWNIISPQLRGENRSGPIDRGGSIATGEADDSIGLLKTDVNLEVVEKALSKVNIARESVCRMAPISSIQEFFLYLGLNGHVGLINYVYQVEGRDLKQGLARLVKHLEAKNPIFRTVMIEDDTGKFTQVQLSHSISTWTYPTDLQAYLDETMTGRQRLGASPVRYSLVLKDERHKGQNFFVISLDHTHCDAFSRYLIDKEILQILKQPTEYASLQNPERPWYGDFVKHNRAHILDEQLSRYWASYMQGATLANVHPLSEAVVGGELDGEMVEIVPIPVVSQSRGTRGQTNPSHVILAAWAMALSKHSGLKDITFGLARHGRSSDSFTDLRRVMGPLVTGTPFRVTLNDTQERTEQLLNRVKEEVLKTARWEQGMVPNIHPDAEGNPWVQSMVNLKSELYGFGNESWTGDEAEADITAIKMRRDLQQYEFKSNWAILLSTLQKQGQLRLRMYYQSQLLSHDKAQALFASFKSLIAELAAADGSLVTGLLD.

A Carrier domain is found at 1-77 (MNSLDQWRDT…QLRGENRSGP (77 aa)). O-(pantetheine 4'-phosphoryl)serine is present on Ser35. Positions 122–537 (MAPISSIQEF…FKSLIAELAA (416 aa)) are condensation.

The protein belongs to the NRP synthetase family.

It functions in the pathway mycotoxin biosynthesis. Functionally, nonribosomal peptide synthetase; part of the gene cluster that mediates the biosynthesis of fumonisins B1 (FB1), B2 (FB2), B3 (FB3), and B4 (FB4), which are carcinogenic mycotoxins. Within the pathway FUM14 catalyzes esterification of CoA-activated tricarballylic acid to the C-14 and C-15 hydroxyls of the fumonisin backbone. The biosynthesis starts with the FUM1-catalyzed carbon chain assembly from one molecule of acetyl-CoA, eight molecules of malonyl-CoA, and two molecules of methionine (in S-adenosyl form). The C18 polyketide chain is released from the enzyme by a nucleophilic attack of a carbanion, which is derived from R-carbon of alanine by decarboxylation, on the carbonyl carbon of polyketide acyl chain. This step is catalyzed by the pyridoxal 5'-phosphate-dependent aminoacyl transferase FUM8. The resultant 3-keto intermediate is then stereospecifically reduced to a 3-hydroxyl product by reductase FUM13. Subsequent oxidations at C-10 by the cytochrome P450 monooxygenase FUM2, C-14 and C-15 by FUM6, FUM12 or FUM15, tricarballylic esterification of the hydroxyl groups on C-14 and C-15 by acyltransferase FUM14, and C-5 hydroxylation by 2-keto-glutarate-dependent dioxygenase FUM3 furnish the biosynthesis of fumonisins. The tricarballylic moieties are most likely derived from the citric acid cycle, and their addition to the carbon backbone may involve FUM7, FUM10, FUM11 and FUM14. In Gibberella moniliformis (strain M3125 / FGSC 7600) (Maize ear and stalk rot fungus), this protein is Nonribosomal peptide synthetase 8.